We begin with the raw amino-acid sequence, 562 residues long: Adenylate kinase isoenzyme 5 (562 aa).

2 adenylate kinase regions span residues 133–316 (KIIL…MAVD) and 377–559 (KIIF…TAID). 142-147 (GSGKGT) serves as a coordination point for ATP. The segment at 162–193 (SVGELLRKKIHSTSSNRKWSLIAKIITTGELA) is NMP 1. AMP contacts are provided by residues Arg168, 191 to 193 (ELA), 219 to 222 (GFPR), and Gln226. The interval 256–266 (KRAEQQGRPDD) is LID 1. An ATP-binding site is contributed by Arg257. AMP-binding residues include Arg263 and Arg274. 386-391 (GSGKGT) contributes to the ATP binding site. Positions 406–435 (STDELLQNELSSESGRSKLIRDIMERGELV) are NMP 2. AMP contacts are provided by residues Thr407, 433 to 435 (ELV), 462 to 465 (GYPR), and Gln469. The tract at residues 499-509 (QRSRNSPQADD) is LID 2. Arg500 provides a ligand contact to ATP. Arg517 lines the AMP pocket. Gly545 is an ATP binding site.

This sequence belongs to the adenylate kinase family. As to quaternary structure, monomer.

It localises to the cytoplasm. It carries out the reaction AMP + ATP = 2 ADP. The enzyme catalyses a 2'-deoxyribonucleoside 5'-diphosphate + ATP = a 2'-deoxyribonucleoside 5'-triphosphate + ADP. It catalyses the reaction a ribonucleoside 5'-diphosphate + ATP = a ribonucleoside 5'-triphosphate + ADP. Functionally, nucleoside monophosphate (NMP) kinase that catalyzes the reversible transfer of the terminal phosphate group between nucleoside triphosphates and monophosphates. Active on AMP and dAMP with ATP as a donor. When GTP is used as phosphate donor, the enzyme phosphorylates AMP, CMP, and to a small extent dCMP. Also displays broad nucleoside diphosphate kinase activity. The chain is Adenylate kinase isoenzyme 5 (Ak5) from Bos taurus (Bovine).